A 501-amino-acid polypeptide reads, in one-letter code: Aldehyde dehydrogenase 1A1 (501 aa).

An N-acetylserine modification is found at Ser2. 2 positions are modified to N6-acetyllysine: Lys91 and Lys128. NAD(+) is bound by residues 167 to 170 (IPWN), 193 to 196 (KPAE), 226 to 227 (GP), and 246 to 247 (GS). An N6-acetyllysine modification is found at Lys252. Glu269 acts as the Proton acceptor in catalysis. 269–271 (ELG) serves as a coordination point for NAD(+). The active-site Nucleophile is the Cys303. The interval 336–501 (LTPGVTQGPQ…VTVKISQKNS (166 aa)) is mediates interaction with PRMT3. Position 337 is a phosphothreonine (Thr337). 349 to 353 (EQYDK) contributes to the NAD(+) binding site. An N6-acetyllysine mark is found at Lys353 and Lys367. 400–402 (EIF) is an NAD(+) binding site. Lys410 is modified (N6-acetyllysine). The residue at position 413 (Ser413) is a Phosphoserine. N6-acetyllysine occurs at positions 419, 435, and 495.

Belongs to the aldehyde dehydrogenase family. Homotetramer. Interacts with PRMT3; the interaction is direct, inhibits ALDH1A1 aldehyde dehydrogenase activity and is independent of the methyltransferase activity of PRMT3. In terms of processing, the N-terminus is blocked most probably by acetylation. In terms of tissue distribution, expressed by erythrocytes (at protein level).

Its subcellular location is the cytoplasm. It is found in the cytosol. The protein resides in the cell projection. It localises to the axon. It catalyses the reaction an aldehyde + NAD(+) + H2O = a carboxylate + NADH + 2 H(+). The enzyme catalyses all-trans-retinal + NAD(+) + H2O = all-trans-retinoate + NADH + 2 H(+). It carries out the reaction 9-cis-retinal + NAD(+) + H2O = 9-cis-retinoate + NADH + 2 H(+). The catalysed reaction is 11-cis-retinal + NAD(+) + H2O = 11-cis-retinoate + NADH + 2 H(+). It catalyses the reaction 13-cis-retinal + NAD(+) + H2O = 13-cis-retinoate + NADH + 2 H(+). The enzyme catalyses 3-deoxyglucosone + NAD(+) + H2O = 2-dehydro-3-deoxy-D-gluconate + NADH + 2 H(+). It carries out the reaction (E)-4-hydroxynon-2-enal + NAD(+) + H2O = (E)-4-hydroxynon-2-enoate + NADH + 2 H(+). The catalysed reaction is malonaldehyde + NAD(+) + H2O = 3-oxopropanoate + NADH + 2 H(+). It catalyses the reaction hexanal + NAD(+) + H2O = hexanoate + NADH + 2 H(+). The enzyme catalyses propanal + NAD(+) + H2O = propanoate + NADH + 2 H(+). It carries out the reaction acetaldehyde + NAD(+) + H2O = acetate + NADH + 2 H(+). The catalysed reaction is benzaldehyde + NAD(+) + H2O = benzoate + NADH + 2 H(+). It catalyses the reaction 4-aminobutanal + NAD(+) + H2O = 4-aminobutanoate + NADH + 2 H(+). Its pathway is cofactor metabolism; retinol metabolism. Its activity is regulated as follows. Inhibited by citral, disulfiram, and cyanamide. Activated by diethylstilbestrol. Inhibited by duocarmycin analogs. Its function is as follows. Cytosolic dehydrogenase that catalyzes the irreversible oxidation of a wide range of aldehydes to their corresponding carboxylic acid. Functions downstream of retinol dehydrogenases and catalyzes the oxidation of retinaldehyde into retinoic acid, the second step in the oxidation of retinol/vitamin A into retinoic acid. This pathway is crucial to control the levels of retinol and retinoic acid, two important molecules which excess can be teratogenic and cytotoxic. Also oxidizes aldehydes resulting from lipid peroxidation like (E)-4-hydroxynon-2-enal/HNE, malonaldehyde and hexanal that form protein adducts and are highly cytotoxic. By participating for instance to the clearance of (E)-4-hydroxynon-2-enal/HNE in the lens epithelium prevents the formation of HNE-protein adducts and lens opacification. Also functions downstream of fructosamine-3-kinase in the fructosamine degradation pathway by catalyzing the oxidation of 3-deoxyglucosone, the carbohydrate product of fructosamine 3-phosphate decomposition, which is itself a potent glycating agent that may react with lysine and arginine side-chains of proteins. Also has an aminobutyraldehyde dehydrogenase activity and is probably part of an alternative pathway for the biosynthesis of GABA/4-aminobutanoate in midbrain, thereby playing a role in GABAergic synaptic transmission. This is Aldehyde dehydrogenase 1A1 from Homo sapiens (Human).